A 943-amino-acid chain; its full sequence is UvrABC system protein A (943 aa).

ATP is bound at residue 31–38; that stretch reads GLSGSGKS. The C4-type zinc-finger motif lies at 253 to 280; sequence CPHCGYSVPELEPRLFSFNNPAGACPTC. 2 ABC transporter domains span residues 310–587 and 607–937; these read WDRR…PHSI and LDKK…RFLK. 640–647 lines the ATP pocket; the sequence is GVSGSGKS. The segment at 740–766 adopts a C4-type zinc-finger fold; that stretch reads CEACQGDGVIKVEMHFLPDVYVPCEQC.

The protein belongs to the ABC transporter superfamily. UvrA family. Forms a heterotetramer with UvrB during the search for lesions.

It localises to the cytoplasm. In terms of biological role, the UvrABC repair system catalyzes the recognition and processing of DNA lesions. UvrA is an ATPase and a DNA-binding protein. A damage recognition complex composed of 2 UvrA and 2 UvrB subunits scans DNA for abnormalities. When the presence of a lesion has been verified by UvrB, the UvrA molecules dissociate. The protein is UvrABC system protein A of Pasteurella multocida (strain Pm70).